A 300-amino-acid chain; its full sequence is B1 kinase (300 aa).

Residues 16 to 282 (WVVGPLIGKG…ITMVNSLTYF (267 aa)) form the Protein kinase domain. ATP is bound by residues 22 to 30 (IGKGGFGSI) and Lys45. The active-site Proton acceptor is Asn147.

The protein belongs to the protein kinase superfamily. Ser/Thr protein kinase family. Poxviruses subfamily. As to quaternary structure, interacts with host JIP1; this interaction increases the amount of MAPK bound to JIP1 and subsequently increases the activity of transcription factors, such as JUN, that respond to these complexes. Interacts with protein OPG198; this interaction inhibits the repressive activity of OPG198 pseudokinase on viral replication factory formation. The cofactor is Mg(2+). Post-translationally, autophosphorylated.

Its subcellular location is the virion. It is found in the host cytoplasm. It carries out the reaction L-seryl-[protein] + ATP = O-phospho-L-seryl-[protein] + ADP + H(+). The enzyme catalyses L-threonyl-[protein] + ATP = O-phospho-L-threonyl-[protein] + ADP + H(+). Its function is as follows. Essential serine/threonine-protein kinase that plays different role in the viral life cycle. Phosphorylates the host small ribosomal protein RACK1 thereby customizing the ribosomes to a state optimal for viral mRNAs (which contain poly-A leaders) but not for host mRNAs. Facilitates viral DNA replication by inhibiting host BANF1, a cellular host defense responsive to foreign DNA. Phosphorylates host BANF1 on serine and threonine residues; this leads to BANF1 relocalization to the cytoplasm, loss of dimerization and impaired DNA binding activity. Indeed, BANF1 activity depends on its DNA-binding property which is blocked by VPK1-mediated phosphorylation. Required for viral intermediate genes expression, probably by inhibiting host BANF1. Modulates cellular responses via host JUN by two different mechanisms, either by direct phosphorylation or by modulation of upstream JIP1-MAPK complexes. Seems to participate in the accumulation/processing of late proteins and thus in virion maturation. In addition, inhibits B12 repressive activity on viral DNA replication via a phosphorylation-dependent mechanism. The protein is B1 kinase (OPG187) of Homo sapiens (Human).